The sequence spans 452 residues: UPF0210 protein PTH_0987 (452 aa).

The protein belongs to the UPF0210 family. Homodimer.

The sequence is that of UPF0210 protein PTH_0987 from Pelotomaculum thermopropionicum (strain DSM 13744 / JCM 10971 / SI).